A 758-amino-acid chain; its full sequence is 5-methyltetrahydropteroyltriglutamate--homocysteine methyltransferase (758 aa).

5-methyltetrahydropteroyltri-L-glutamate is bound by residues 16-19 and Lys-112; that span reads RELK. Residues 433-435 and Glu-486 each bind L-homocysteine; that span reads IGS. L-methionine contacts are provided by residues 433-435 and Glu-486; that span reads IGS. Residues 517–518 and Trp-563 contribute to the 5-methyltetrahydropteroyltri-L-glutamate site; that span reads RC. L-homocysteine is bound at residue Asp-601. Asp-601 is an L-methionine binding site. Glu-607 is a 5-methyltetrahydropteroyltri-L-glutamate binding site. His-643, Cys-645, and Glu-667 together coordinate Zn(2+). His-696 serves as the catalytic Proton donor. Residue Cys-728 participates in Zn(2+) binding.

This sequence belongs to the vitamin-B12 independent methionine synthase family. The cofactor is Zn(2+).

The catalysed reaction is 5-methyltetrahydropteroyltri-L-glutamate + L-homocysteine = tetrahydropteroyltri-L-glutamate + L-methionine. It participates in amino-acid biosynthesis; L-methionine biosynthesis via de novo pathway; L-methionine from L-homocysteine (MetE route): step 1/1. In terms of biological role, catalyzes the transfer of a methyl group from 5-methyltetrahydrofolate to homocysteine resulting in methionine formation. This is 5-methyltetrahydropteroyltriglutamate--homocysteine methyltransferase from Neisseria gonorrhoeae (strain ATCC 700825 / FA 1090).